Here is a 101-residue protein sequence, read N- to C-terminus: MAKKSKIVKNQRRAATVARYASRRTALKDIIRSPSSAPEQRSTAQRALARQPRDASPVRLRNRDAIDGRPRGHLRKFGLSRVRVRQLAHDGHLPGVRKASW.

Residues 28–57 form a disordered region; it reads KDIIRSPSSAPEQRSTAQRALARQPRDASP. Residues 33–45 show a composition bias toward polar residues; it reads SPSSAPEQRSTAQ.

It belongs to the universal ribosomal protein uS14 family. Part of the 30S ribosomal subunit. Contacts proteins S3 and S10.

Binds 16S rRNA, required for the assembly of 30S particles and may also be responsible for determining the conformation of the 16S rRNA at the A site. This chain is Small ribosomal subunit protein uS14A, found in Mycobacterium bovis (strain ATCC BAA-935 / AF2122/97).